The chain runs to 643 residues: Cytoplasmic dynein 1 intermediate chain 1 (643 aa).

Composition is skewed to basic and acidic residues over residues 1-13 (MSDK…ELER) and 20-60 (QIRE…RETE). 2 disordered regions span residues 1–65 (MSDK…LLQS) and 96–123 (MSPS…RTLQ). S2 is modified (N-acetylserine). The interval 2–123 (SDKSDLKAEL…DLGPLTRTLQ (122 aa)) is interaction with DCTN1. 2 positions are modified to phosphoserine: S50 and S100. A compositionally biased stretch (low complexity) spans 96-107 (MSPSSKSVSTPS). T105 carries the post-translational modification Phosphothreonine. Phosphoserine is present on residues S107 and S111. An interaction with DYNLT1 region spans residues 145–161 (KLGVSKVTQVDFLPREV). The tract at residues 167 to 219 (ETQTPLATHQSEEDEEDEEMVEPKVGHDSELENQDKKQETKEAPPRELTEEEK) is disordered. Phosphothreonine is present on T174. S177 and S195 each carry phosphoserine. Positions 187–219 (VEPKVGHDSELENQDKKQETKEAPPRELTEEEK) are enriched in basic and acidic residues. 7 WD repeats span residues 283–332 (SKHR…TTPE), 336–376 (HCQS…RTPV), 385–426 (AHTH…TPQE), 435–475 (SKPV…AGIG), 480–525 (GHQG…PLYS), 528–568 (DNAD…EVPT), and 574–613 (EGAY…VPHN). S633 is modified (phosphoserine).

This sequence belongs to the dynein intermediate chain family. In terms of assembly, homodimer. The cytoplasmic dynein 1 complex consists of two catalytic heavy chains (HCs) and a number of non-catalytic subunits presented by intermediate chains (ICs), light intermediate chains (LICs) and light chains (LCs); the composition seems to vary in respect to the IC, LIC and LC composition. The heavy chain homodimer serves as a scaffold for the probable homodimeric assembly of the respective non-catalytic subunits. The ICs and LICs bind directly to the HC dimer and the LCs assemble on the IC dimer. Isoform 1, isoform 2 and isoform 3 interact with DYNC1H1. Isoform 1, isoform 2 and isoform 3 interact with DYNLT3. Isoform 1, isoform 2 and isoform 3 interact with DYNLT1. Interacts with DCTN1. Interacts with MCRS1; the interaction is required for the proper distribution of centriolar satellites. In terms of tissue distribution, high levels seen in the brain and testis, while a lower level expression is seen in the liver, spleen, kidney, lung, skeletal muscle and heart.

It is found in the cytoplasm. The protein localises to the chromosome. The protein resides in the centromere. It localises to the kinetochore. Its subcellular location is the cytoskeleton. It is found in the spindle pole. Acts as one of several non-catalytic accessory components of the cytoplasmic dynein 1 complex that are thought to be involved in linking dynein to cargos and to adapter proteins that regulate dynein function. Cytoplasmic dynein 1 acts as a motor for the intracellular retrograde motility of vesicles and organelles along microtubules. The intermediate chains mediate the binding of dynein to dynactin via its 150 kDa component (p150-glued) DCTN1. May play a role in mediating the interaction of cytoplasmic dynein with membranous organelles and kinetochores. This is Cytoplasmic dynein 1 intermediate chain 1 (Dync1i1) from Rattus norvegicus (Rat).